We begin with the raw amino-acid sequence, 287 residues long: NH(3)-dependent NAD(+) synthetase (287 aa).

53–60 provides a ligand contact to ATP; sequence GISGGQDS. Asp59 is a binding site for Mg(2+). Arg146 serves as a coordination point for deamido-NAD(+). Thr166 lines the ATP pocket. Glu171 serves as a coordination point for Mg(2+). Deamido-NAD(+)-binding residues include Lys179 and Asp186. Positions 195 and 217 each coordinate ATP. Deamido-NAD(+) is bound at residue 266–267; sequence HK.

The protein belongs to the NAD synthetase family. In terms of assembly, homodimer.

It catalyses the reaction deamido-NAD(+) + NH4(+) + ATP = AMP + diphosphate + NAD(+) + H(+). Its pathway is cofactor biosynthesis; NAD(+) biosynthesis; NAD(+) from deamido-NAD(+) (ammonia route): step 1/1. Its function is as follows. Catalyzes the ATP-dependent amidation of deamido-NAD to form NAD. Uses ammonia as a nitrogen source. In Deinococcus radiodurans (strain ATCC 13939 / DSM 20539 / JCM 16871 / CCUG 27074 / LMG 4051 / NBRC 15346 / NCIMB 9279 / VKM B-1422 / R1), this protein is NH(3)-dependent NAD(+) synthetase.